Reading from the N-terminus, the 172-residue chain is Signal peptidase complex catalytic subunit sec11 (172 aa).

Topologically, residues 1 to 14 (MLSFLQNPRQAAAQ) are cytoplasmic. The chain crosses the membrane as a helical; Signal-anchor for type II membrane protein span at residues 15–35 (VLNFALILSTAFMMWKGLSVA). At 36–172 (SDSPSPIVVV…MGLVVVLQRE (137 aa)) the chain is on the lumenal side. Catalysis depends on charge relay system residues Ser49, His90, and Asp115. The interval 158–169 (VMLGMMGLVVVL) is C-terminal short (CTS) helix.

Belongs to the peptidase S26B family. In terms of assembly, component of the signal peptidase complex (SPC) composed of a catalytic subunit SEC11 and three accessory subunits SPC1, SPC2 and SPC3. The complex induces a local thinning of the ER membrane which is used to measure the length of the signal peptide (SP) h-region of protein substrates. This ensures the selectivity of the complex towards h-regions shorter than 18-20 amino acids. SPC associates with the translocon complex.

Its subcellular location is the endoplasmic reticulum membrane. It carries out the reaction Cleavage of hydrophobic, N-terminal signal or leader sequences from secreted and periplasmic proteins.. Functionally, catalytic component of the signal peptidase complex (SPC) which catalyzes the cleavage of N-terminal signal sequences from nascent proteins as they are translocated into the lumen of the endoplasmic reticulum. Specifically cleaves N-terminal signal peptides that contain a hydrophobic alpha-helix (h-region) shorter than 18-20 amino acids. The protein is Signal peptidase complex catalytic subunit sec11 (sec11) of Sclerotinia sclerotiorum (strain ATCC 18683 / 1980 / Ss-1) (White mold).